Consider the following 517-residue polypeptide: Probable bifunctional methylthioribulose-1-phosphate dehydratase/enolase-phosphatase E1 1 (517 aa).

A methylthioribulose-1-phosphate dehydratase region spans residues 1–240; sequence MAAAALNGLK…AIKLYQLGLD (240 aa). Residue Cys112 coordinates substrate. Zn(2+) is bound by residues His130 and His132. The Proton donor/acceptor; for methylthioribulose-1-phosphate dehydratase activity role is filled by Glu155. A Zn(2+)-binding site is contributed by His205. The segment at 278–517 is enolase-phosphatase E1; sequence IVLDIEGTTT…FKTITSFSDI (240 aa). Positions 281 and 283 each coordinate Mg(2+). Substrate is bound by residues 416-417 and Lys450; that span reads SS. Residue Asp476 coordinates Mg(2+).

This sequence in the N-terminal section; belongs to the aldolase class II family. MtnB subfamily. It in the C-terminal section; belongs to the HAD-like hydrolase superfamily. MasA/MtnC family. Requires Zn(2+) as cofactor. Mg(2+) is required as a cofactor.

It catalyses the reaction 5-(methylsulfanyl)-D-ribulose 1-phosphate = 5-methylsulfanyl-2,3-dioxopentyl phosphate + H2O. The enzyme catalyses 5-methylsulfanyl-2,3-dioxopentyl phosphate + H2O = 1,2-dihydroxy-5-(methylsulfanyl)pent-1-en-3-one + phosphate. It functions in the pathway amino-acid biosynthesis; L-methionine biosynthesis via salvage pathway; L-methionine from S-methyl-5-thio-alpha-D-ribose 1-phosphate: step 2/6. It participates in amino-acid biosynthesis; L-methionine biosynthesis via salvage pathway; L-methionine from S-methyl-5-thio-alpha-D-ribose 1-phosphate: step 3/6. The protein operates within amino-acid biosynthesis; L-methionine biosynthesis via salvage pathway; L-methionine from S-methyl-5-thio-alpha-D-ribose 1-phosphate: step 4/6. The chain is Probable bifunctional methylthioribulose-1-phosphate dehydratase/enolase-phosphatase E1 1 from Vitis vinifera (Grape).